The primary structure comprises 440 residues: Beta-1,3-galactosyl-O-glycosyl-glycoprotein beta-1,6-N-acetylglucosaminyltransferase 3 (440 aa).

At 1 to 12 the chain is on the cytoplasmic side; the sequence is MKMTGWKKKLCR. Residues 13 to 30 traverse the membrane as a helical; Signal-anchor for type II membrane protein segment; sequence GHHLWALGCYMLLAVVAL. The Lumenal segment spans residues 31–440; the sequence is RLSLRLKCDV…RHKAIYGTEL (410 aa). 2 N-linked (GlcNAc...) asparagine glycosylation sites follow: asparagine 72 and asparagine 108. 4 cysteine pairs are disulfide-bonded: cysteine 73–cysteine 230, cysteine 164–cysteine 384, cysteine 185–cysteine 212, and cysteine 393–cysteine 425.

Belongs to the glycosyltransferase 14 family. N-glycosylated. In terms of tissue distribution, primarily expressed in mucus-secreting tissues.

It is found in the golgi apparatus membrane. The catalysed reaction is a 3-O-[beta-D-galactosyl-(1-&gt;3)-N-acetyl-alpha-D-galactosaminyl]-L-seryl-[protein] + UDP-N-acetyl-alpha-D-glucosamine = 3-O-{beta-D-galactosyl-(1-&gt;3)-[N-acetyl-beta-D-glucosaminyl-(1-&gt;6)]-N-acetyl-alpha-D-galactosaminyl}-L-seryl-[protein] + UDP + H(+). It catalyses the reaction a 3-O-[beta-D-galactosyl-(1-&gt;3)-N-acetyl-alpha-D-galactosaminyl]-L-threonyl-[protein] + UDP-N-acetyl-alpha-D-glucosamine = a 3-O-{beta-D-galactosyl-(1-&gt;3)-[N-acetyl-beta-D-glucosaminyl-(1-&gt;6)]-N-acetyl-alpha-D-galactosaminyl}-L-threonyl-[protein] + UDP + H(+). It carries out the reaction a beta-D-Gal-(1-&gt;4)-beta-D-GlcNAc-(1-&gt;3)-beta-D-Gal-(1-&gt;4)-beta-D-GlcNAc derivative + UDP-N-acetyl-alpha-D-glucosamine = a beta-D-Gal-(1-&gt;4)-beta-D-GlcNAc-(1-&gt;3)-[beta-D-GlcNAc-(1-&gt;6)]-beta-D-Gal-(1-&gt;4)-N-acetyl-beta-D-glucosaminyl derivative + UDP + H(+). The enzyme catalyses 3-O-[N-acetyl-beta-D-glucosaminyl-(1-&gt;3)-N-acetyl-alpha-D-galactosaminyl]-L-seryl-[protein] + UDP-N-acetyl-alpha-D-glucosamine = 3-O-[N-acetyl-beta-D-glucosaminyl-(1-&gt;3)-[N-acetyl-beta-D-glucosaminyl-(1-&gt;6)]-N-acetyl-alpha-D-galactosaminyl]-L-seryl-[protein] + UDP + H(+). The catalysed reaction is a 3-O-[N-acetyl-beta-D-glucosaminyl-(1-&gt;3)-N-acetyl-alpha-D-galactosaminyl]-L-threonyl-[protein] + UDP-N-acetyl-alpha-D-glucosamine = 3-O-[N-acetyl-beta-D-glucosaminyl-(1-&gt;3)-[N-acetyl-beta-D-glucosaminyl-(1-&gt;6)]-N-acetyl-alpha-D-galactosaminyl]-L-threonyl-[protein] + UDP + H(+). The protein operates within protein modification; protein glycosylation. Glycosyltransferase that can synthesize all known mucin beta 6 N-acetylglucosaminides. Mediates core 2 and core 4 O-glycan branching, 2 important steps in mucin-type biosynthesis. Also has I-branching enzyme activity by converting linear into branched poly-N-acetyllactosaminoglycans, leading to introduce the blood group I antigen during embryonic development. This Bos taurus (Bovine) protein is Beta-1,3-galactosyl-O-glycosyl-glycoprotein beta-1,6-N-acetylglucosaminyltransferase 3 (GCNT3).